Consider the following 387-residue polypeptide: Phosphoglycerate kinase (387 aa).

Substrate is bound by residues 21–23 (DLN), Arg-36, 59–62 (HLGR), Arg-113, and Arg-146. ATP contacts are provided by residues Lys-197, Glu-314, and 340 to 343 (GGDT).

The protein belongs to the phosphoglycerate kinase family. In terms of assembly, monomer.

It localises to the cytoplasm. The enzyme catalyses (2R)-3-phosphoglycerate + ATP = (2R)-3-phospho-glyceroyl phosphate + ADP. It participates in carbohydrate degradation; glycolysis; pyruvate from D-glyceraldehyde 3-phosphate: step 2/5. The sequence is that of Phosphoglycerate kinase from Pseudomonas putida (strain ATCC 47054 / DSM 6125 / CFBP 8728 / NCIMB 11950 / KT2440).